We begin with the raw amino-acid sequence, 188 residues long: Adenine phosphoribosyltransferase (188 aa).

Belongs to the purine/pyrimidine phosphoribosyltransferase family. As to quaternary structure, homodimer.

The protein localises to the cytoplasm. The catalysed reaction is AMP + diphosphate = 5-phospho-alpha-D-ribose 1-diphosphate + adenine. It functions in the pathway purine metabolism; AMP biosynthesis via salvage pathway; AMP from adenine: step 1/1. In terms of biological role, catalyzes a salvage reaction resulting in the formation of AMP, that is energically less costly than de novo synthesis. This chain is Adenine phosphoribosyltransferase, found in Burkholderia vietnamiensis (strain G4 / LMG 22486) (Burkholderia cepacia (strain R1808)).